The sequence spans 233 residues: Ribosome maturation protein SDO1 homolog (233 aa).

This sequence belongs to the SDO1/SBDS family.

The polypeptide is Ribosome maturation protein SDO1 homolog (Aeropyrum pernix (strain ATCC 700893 / DSM 11879 / JCM 9820 / NBRC 100138 / K1)).